The chain runs to 589 residues: Isocitrate dehydrogenase kinase/phosphatase (589 aa).

ATP contacts are provided by residues 317–323 (AAGIKGM) and Lys-338. Residue Asp-373 is part of the active site.

This sequence belongs to the AceK family.

The protein resides in the cytoplasm. The enzyme catalyses L-seryl-[isocitrate dehydrogenase] + ATP = O-phospho-L-seryl-[isocitrate dehydrogenase] + ADP + H(+). Functionally, bifunctional enzyme which can phosphorylate or dephosphorylate isocitrate dehydrogenase (IDH) on a specific serine residue. This is a regulatory mechanism which enables bacteria to bypass the Krebs cycle via the glyoxylate shunt in response to the source of carbon. When bacteria are grown on glucose, IDH is fully active and unphosphorylated, but when grown on acetate or ethanol, the activity of IDH declines drastically concomitant with its phosphorylation. The polypeptide is Isocitrate dehydrogenase kinase/phosphatase (Colwellia psychrerythraea (strain 34H / ATCC BAA-681) (Vibrio psychroerythus)).